Reading from the N-terminus, the 906-residue chain is Protein translocase subunit SecA (906 aa).

ATP is bound by residues glutamine 89, 107–111, and aspartate 501; that span reads GEGKT. Positions 891, 893, 902, and 903 each coordinate Zn(2+).

The protein belongs to the SecA family. Monomer and homodimer. Part of the essential Sec protein translocation apparatus which comprises SecA, SecYEG and auxiliary proteins SecDF-YajC and YidC. Zn(2+) serves as cofactor.

Its subcellular location is the cell inner membrane. The protein resides in the cytoplasm. It carries out the reaction ATP + H2O + cellular proteinSide 1 = ADP + phosphate + cellular proteinSide 2.. In terms of biological role, part of the Sec protein translocase complex. Interacts with the SecYEG preprotein conducting channel. Has a central role in coupling the hydrolysis of ATP to the transfer of proteins into and across the cell membrane, serving both as a receptor for the preprotein-SecB complex and as an ATP-driven molecular motor driving the stepwise translocation of polypeptide chains across the membrane. This is Protein translocase subunit SecA from Parvibaculum lavamentivorans (strain DS-1 / DSM 13023 / NCIMB 13966).